The following is a 745-amino-acid chain: Serine/threonine-protein kinase BUR1 (745 aa).

Residues 1–21 (MSVIAGHHVPRSNDQRQYDTP) form a disordered region. The Protein kinase domain occupies 44–349 (YEVIEKLGQG…ALDALNHKFF (306 aa)). ATP contacts are provided by residues 50 to 58 (LGQGTFGVV) and Lys73. Catalysis depends on Asp179, which acts as the Proton acceptor. 3 stretches are compositionally biased toward basic and acidic residues: residues 380–406 (DKEQ…RYNA), 428–475 (DYID…DIQN), and 493–508 (KLRE…KKYD). A disordered region spans residues 380–701 (DKEQAVSELK…EVSDLEEDSD (322 aa)). The span at 516-534 (SRGSKSPSPSKLSSISQSK) shows a compositional bias: low complexity. The span at 547-557 (ASRESSLERKQ) shows a compositional bias: basic and acidic residues. Composition is skewed to polar residues over residues 558 to 567 (VSNGIRTTTD) and 586 to 598 (LTSN…PTRN). Residues 599–631 (KSVERPKDLEKPTNGVTEDRNKKPVLEEKKEVV) are compositionally biased toward basic and acidic residues. The span at 632 to 660 (KPNLAIPKIKKSSSLVSLSSRSSTTPVIS) shows a compositional bias: low complexity. Positions 661-674 (NPSKVTKRAASSVT) are enriched in polar residues. Over residues 692–701 (EVSDLEEDSD) the composition is skewed to acidic residues.

Belongs to the protein kinase superfamily. CMGC Ser/Thr protein kinase family. CDC2/CDKX subfamily.

The protein resides in the nucleus. The catalysed reaction is L-seryl-[protein] + ATP = O-phospho-L-seryl-[protein] + ADP + H(+). It catalyses the reaction L-threonyl-[protein] + ATP = O-phospho-L-threonyl-[protein] + ADP + H(+). The enzyme catalyses [DNA-directed RNA polymerase] + ATP = phospho-[DNA-directed RNA polymerase] + ADP + H(+). Functionally, serine/threonine-protein kinase involved in transcription regulation. Phosphorylates the UBC2/RAD6 ubiquitin-conjugating enzyme (E2), leading to monoubiquitination of histone H2B and the silencing of telomeric-associated genes. Also required for histone H3 methylation. Necessary for the recovery from pheromone-induced growth arrest in the cell cycle G1 phase. Required for pseudohyphal growth and virulence in mice. This Candida albicans (strain SC5314 / ATCC MYA-2876) (Yeast) protein is Serine/threonine-protein kinase BUR1 (CRK1).